The sequence spans 177 residues: Large ribosomal subunit protein uL6 (177 aa).

It belongs to the universal ribosomal protein uL6 family. As to quaternary structure, part of the 50S ribosomal subunit.

Its function is as follows. This protein binds to the 23S rRNA, and is important in its secondary structure. It is located near the subunit interface in the base of the L7/L12 stalk, and near the tRNA binding site of the peptidyltransferase center. The polypeptide is Large ribosomal subunit protein uL6 (Rickettsia akari (strain Hartford)).